Consider the following 479-residue polypeptide: Inhibitory synaptic factor 2A (479 aa).

S177 is modified (phosphoserine). Disordered regions lie at residues 226 to 247 (GRAK…ALRR) and 315 to 338 (SPEC…PSPT). Positions 228–237 (AKQDRGRPNS) are enriched in basic and acidic residues. A compositionally biased stretch (polar residues) spans 318-337 (CSEQPSQTHTPPGLGNQPSP). A coiled-coil region spans residues 353-379 (TEVVDLKAQLQMMENLISSSQETIKVL). Polar residues predominate over residues 449 to 461 (SPYSQETYSSTPK). The interval 449–472 (SPYSQETYSSTPKQKSKTESKKHG) is disordered.

It belongs to the INSYN2 family. In terms of assembly, interacts with GPHN.

Its subcellular location is the postsynaptic density. Functionally, component of the protein machinery at the inhibitory synapses, probably acting as a scaffold. Inhibitory synapses dampen neuronal activity through postsynaptic hyperpolarization. This synaptic inhibition is fundamental for the functioning of the central nervous system, shaping and orchestrating the flow of information through neuronal networks to generate a precise neural code. This chain is Inhibitory synaptic factor 2A, found in Homo sapiens (Human).